The following is a 511-amino-acid chain: Maturase K (511 aa).

The protein belongs to the intron maturase 2 family. MatK subfamily.

It is found in the plastid. Its subcellular location is the chloroplast. In terms of biological role, usually encoded in the trnK tRNA gene intron. Probably assists in splicing its own and other chloroplast group II introns. The polypeptide is Maturase K (Melica altissima (Siberian melic grass)).